The following is a 711-amino-acid chain: Zinc finger CCCH domain-containing protein 32 (711 aa).

The segment covering 1-21 (MEADGAAAAAAAGEASTEAGA) has biased composition (low complexity). The disordered stretch occupies residues 1 to 23 (MEADGAAAAAAAGEASTEAGARP). 3 consecutive C3H1-type zinc fingers follow at residues 31–60 (LRRN…HSDN), 62–88 (RMNP…HPPI), and 112–139 (GKQL…HGPQ). Disordered regions lie at residues 221 to 246 (KSEK…GDHP), 339 to 376 (RFNG…HSER), 405 to 561 (SSLA…EGPK), and 573 to 701 (AAWA…DDDD). Composition is skewed to basic and acidic residues over residues 364–376 (SERS…HSER) and 413–427 (RNGE…YRER). A compositionally biased stretch (basic residues) spans 428 to 437 (AHGHRSHRDH). Composition is skewed to basic and acidic residues over residues 460–509 (SPDR…RRSS) and 585–594 (KQDKSAEVSH). 2 stretches are compositionally biased toward acidic residues: residues 648–663 (EDII…DADN) and 686–701 (ENAY…DDDD).

The polypeptide is Zinc finger CCCH domain-containing protein 32 (Oryza sativa subsp. japonica (Rice)).